The chain runs to 177 residues: ATP synthase subunit delta (177 aa).

The protein belongs to the ATPase delta chain family. In terms of assembly, F-type ATPases have 2 components, F(1) - the catalytic core - and F(0) - the membrane proton channel. F(1) has five subunits: alpha(3), beta(3), gamma(1), delta(1), epsilon(1). F(0) has three main subunits: a(1), b(2) and c(10-14). The alpha and beta chains form an alternating ring which encloses part of the gamma chain. F(1) is attached to F(0) by a central stalk formed by the gamma and epsilon chains, while a peripheral stalk is formed by the delta and b chains.

The protein resides in the cell membrane. In terms of biological role, f(1)F(0) ATP synthase produces ATP from ADP in the presence of a proton or sodium gradient. F-type ATPases consist of two structural domains, F(1) containing the extramembraneous catalytic core and F(0) containing the membrane proton channel, linked together by a central stalk and a peripheral stalk. During catalysis, ATP synthesis in the catalytic domain of F(1) is coupled via a rotary mechanism of the central stalk subunits to proton translocation. Functionally, this protein is part of the stalk that links CF(0) to CF(1). It either transmits conformational changes from CF(0) to CF(1) or is implicated in proton conduction. In Exiguobacterium sp. (strain ATCC BAA-1283 / AT1b), this protein is ATP synthase subunit delta.